Here is a 350-residue protein sequence, read N- to C-terminus: UDP-N-acetylenolpyruvoylglucosamine reductase (350 aa).

Residues 24 to 195 (HVEATARWLL…VAVEFNLPLL (172 aa)) enclose the FAD-binding PCMH-type domain. The active site involves Arg172. Catalysis depends on Ser245, which acts as the Proton donor. Glu342 is an active-site residue.

This sequence belongs to the MurB family. FAD is required as a cofactor.

It is found in the cytoplasm. The enzyme catalyses UDP-N-acetyl-alpha-D-muramate + NADP(+) = UDP-N-acetyl-3-O-(1-carboxyvinyl)-alpha-D-glucosamine + NADPH + H(+). It participates in cell wall biogenesis; peptidoglycan biosynthesis. In terms of biological role, cell wall formation. The polypeptide is UDP-N-acetylenolpyruvoylglucosamine reductase (Xanthomonas euvesicatoria pv. vesicatoria (strain 85-10) (Xanthomonas campestris pv. vesicatoria)).